A 165-amino-acid polypeptide reads, in one-letter code: Destrin (165 aa).

At Ala2 the chain carries N-acetylalanine. Positions 4-153 constitute an ADF-H domain; sequence GVQVADEVCR…NRACIAEKLG (150 aa). A Nuclear localization signal motif is present at residues 30–34; sequence KKRKK.

The protein belongs to the actin-binding proteins ADF family.

In terms of biological role, actin-depolymerizing protein. Severs actin filaments (F-actin) and binds to actin monomers (G-actin). Acts in a pH-independent manner. The sequence is that of Destrin (DSTN) from Gallus gallus (Chicken).